Reading from the N-terminus, the 613-residue chain is MSRFARLLLIVALFFTNAWAKTVKETLRITWKEGAPNGQARELIYTNGQFPSPTLVWDEDDDIEVTVYNEMAKNVTVHWHGLDQKDTPWSDGTPGLSQRPIQPGNKFVYRFKASPPGNHWYHSHEKMSLVDGLYGAIHIRPKGDRTGLWSQISQDKDDIKAMENAAYDPEYLVVSDWSQYTSEEYWKISTDSGLLVFCLDSILVNGKGEVYCPGQKFLQAELAPGLVEDAFPPGTEVSDKGCFPADLDQVQGGPWNITKRPDLIPPRVQEGCVASRHENATIVVDPSKNNGWVSMHFVAAATTAQITFSVDSHEFWLYEIDGNYVNPRKFVSAVMSAGETFSVMIKLDQEPGKYTMRIPNSGASQVLGGFAEMVYKGCEREEKAGKAYLSYGGNPTSPDVEKNSFFPWQLDTDHMSPWPPNKPRPGNADEEHLLVLGRVGAPYNYTMNTKYLYPVDFQNDDPLLFYPNATRDTENDGLVLRTKNGSWVDLILQVSTLPGDTASFEHFMHKHGSKTWRIGFGTGVWNYTSVEEAIQERPQDFNLETPGLRDTWITAFSIGGEAYWSVFRYFVDNPGPWLFHCHIELHLMGGMGIAILDGVDAWPEHIPEEYQLR.

The N-terminal stretch at 1–20 (MSRFARLLLIVALFFTNAWA) is a signal peptide. 2 consecutive Plastocyanin-like domains span residues 29–142 (ITWK…IRPK) and 171–359 (YLVV…MRIP). Residue N74 is glycosylated (N-linked (GlcNAc...) asparagine). The Cu cation site is built by H78, H80, H122, and H124. N256, N279, N444, N468, and N484 each carry an N-linked (GlcNAc...) asparagine glycan. The 131-residue stretch at 468 to 598 (NATRDTENDG…GGMGIAILDG (131 aa)) folds into the Plastocyanin-like 3 domain. 3 residues coordinate Cu cation: H506, H509, and H511. Residue N526 is glycosylated (N-linked (GlcNAc...) asparagine). Cu cation is bound by residues H580, C581, H582, and H586.

The protein belongs to the multicopper oxidase family. Requires Cu cation as cofactor.

The protein resides in the cell surface. The protein operates within pigment biosynthesis. Its function is as follows. Laccase; part of the Pks1 gene cluster that mediates the biosynthesis of an anthraquinone derivative pigment that contributes to conidial pigmentation that provides protection from UV radiation, heat and cold stress. The polyketide synthase Pks1 produces 1-acetyl-2,4,6,8-tetrahydroxy-9,10-anthraquinone though condensation of acetyl-CoA with malonyl-CoA. The dehydratase EthD and the laccase Mlac1 further convert the anthraquinone derivative into the final conidial pigment. The protein is Laccase 1 of Metarhizium robertsii (strain ARSEF 23 / ATCC MYA-3075) (Metarhizium anisopliae (strain ARSEF 23)).